A 1855-amino-acid chain; its full sequence is Unconventional myosin-Va (1855 aa).

N-acetylalanine is present on Ala-2. Residues Thr-8 to Pro-60 enclose the Myosin N-terminal SH3-like domain. Residues Val-69–Ala-763 form the Myosin motor domain. Gly-163–Thr-170 contacts ATP. Residues Ala-598–His-631 are disordered. At Ser-600 the chain carries Phosphoserine. Positions Ser-600–Thr-613 are enriched in polar residues. The interval Leu-643–Asp-665 is actin-binding. 6 IQ domains span residues Leu-766–Arg-788, Met-789–Ala-818, Arg-814–Ile-836, Arg-837–Leu-861, Arg-862–Lys-883, and Ser-885–Ser-914. Coiled coils occupy residues Ser-914–Val-1237 and Val-1338–Val-1445. Thr-1032 is subject to Phosphothreonine. Phosphoserine is present on residues Ser-1452 and Ser-1652. The region spanning Thr-1534–Asp-1810 is the Dilute domain. The residue at position 1760 (Thr-1760) is a Phosphothreonine.

The protein belongs to the TRAFAC class myosin-kinesin ATPase superfamily. Myosin family. May be a homodimer, which associates with multiple calmodulin or myosin light chains. Interacts with RIPL2, the interaction is required for its role in dendrite formation. Interacts with MLPH. Interacts with SYTL4. Interacts with MYRIP. Interacts with RAB10; mediates the transport to the plasma membrane of SLC2A4/GLUT4 storage vesicles. Interacts with FMR1; this interaction occurs in association with polyribosome. In terms of tissue distribution, detected in melanocytes.

The catalysed reaction is ATP + H2O = ADP + phosphate + H(+). In terms of biological role, processive actin-based motor that can move in large steps approximating the 36-nm pseudo-repeat of the actin filament. Can hydrolyze ATP in the presence of actin, which is essential for its function as a motor protein. Involved in melanosome transport. Also mediates the transport of vesicles to the plasma membrane. May also be required for some polarization process involved in dendrite formation. This chain is Unconventional myosin-Va (MYO5A), found in Homo sapiens (Human).